The chain runs to 361 residues: Histidinol-phosphate aminotransferase (361 aa).

Lys-221 carries the N6-(pyridoxal phosphate)lysine modification.

The protein belongs to the class-II pyridoxal-phosphate-dependent aminotransferase family. Histidinol-phosphate aminotransferase subfamily. Homodimer. It depends on pyridoxal 5'-phosphate as a cofactor.

It catalyses the reaction L-histidinol phosphate + 2-oxoglutarate = 3-(imidazol-4-yl)-2-oxopropyl phosphate + L-glutamate. The protein operates within amino-acid biosynthesis; L-histidine biosynthesis; L-histidine from 5-phospho-alpha-D-ribose 1-diphosphate: step 7/9. The polypeptide is Histidinol-phosphate aminotransferase (Symbiobacterium thermophilum (strain DSM 24528 / JCM 14929 / IAM 14863 / T)).